Here is a 138-residue protein sequence, read N- to C-terminus: Basic phospholipase A2 Pla2Vb (138 aa).

The first 16 residues, 1-16, serve as a signal peptide directing secretion; that stretch reads MRTLWIVAVWLMGVEG. Cystine bridges form between Cys-42/Cys-131, Cys-44/Cys-60, Cys-59/Cys-111, Cys-65/Cys-138, Cys-66/Cys-104, Cys-73/Cys-97, and Cys-91/Cys-102. Residues Tyr-43, Gly-45, and Gly-47 each contribute to the Ca(2+) site. His-63 is a catalytic residue. Ca(2+) is bound at residue Asp-64. Asp-105 is an active-site residue.

Belongs to the phospholipase A2 family. Group II subfamily. D49 sub-subfamily. The cofactor is Ca(2+). In terms of tissue distribution, expressed by the venom gland.

The protein localises to the secreted. The enzyme catalyses a 1,2-diacyl-sn-glycero-3-phosphocholine + H2O = a 1-acyl-sn-glycero-3-phosphocholine + a fatty acid + H(+). Functionally, snake venom phospholipase A2 (PLA2) that exhibits medium anticoagulant effects by binding to factor Xa (F10) and inhibiting the prothrombinase activity (IC(50) is 90 nM). PLA2 catalyzes the calcium-dependent hydrolysis of the 2-acyl groups in 3-sn-phosphoglycerides. This chain is Basic phospholipase A2 Pla2Vb, found in Vipera berus berus (Common viper).